The sequence spans 356 residues: MSERRIIHVDMDYFFAQVEMRDNPKLKGKPVIVGGKASGRGVVSTASYEARQYGVHSAMPTAQAHKLCPNGYYVTPRFEAYKTASEKIMNIFKSYTEVVEPLSLDEAYLDITHLVRPDLPASRIAQYIRRDIYEATMLTSSAGVSYNKFLAKLASGMNKPNGLTVIDYRNVHDILMGLDIGDFPGVGKASKQKMHQEAIYTGQDLYNQSERDLIRLFGKRGHGLYNKARGIDHNPVKPTRIRKSVGTERTFATDMNDDEEILQKIWELSNKTAERLAKLQKSGKTVTVKIKTFKFESLSKQRSLRDPVRSETDIYNIAYDLYTELKNPETPIRLVGVTVGNLEKATYENMTIYDYI.

The 182-residue stretch at 6 to 187 folds into the UmuC domain; it reads IIHVDMDYFF…LDIGDFPGVG (182 aa). 2 residues coordinate Mg(2+): D10 and D105. E106 is an active-site residue.

Belongs to the DNA polymerase type-Y family. In terms of assembly, monomer. Mg(2+) is required as a cofactor.

Its subcellular location is the cytoplasm. It carries out the reaction DNA(n) + a 2'-deoxyribonucleoside 5'-triphosphate = DNA(n+1) + diphosphate. Poorly processive, error-prone DNA polymerase involved in untargeted mutagenesis. Copies undamaged DNA at stalled replication forks, which arise in vivo from mismatched or misaligned primer ends. These misaligned primers can be extended by PolIV. Exhibits no 3'-5' exonuclease (proofreading) activity. May be involved in translesional synthesis, in conjunction with the beta clamp from PolIII. This Staphylococcus saprophyticus subsp. saprophyticus (strain ATCC 15305 / DSM 20229 / NCIMB 8711 / NCTC 7292 / S-41) protein is DNA polymerase IV.